The primary structure comprises 212 residues: Uridine kinase (212 aa).

13–20 (GGSGSGKT) contributes to the ATP binding site.

It belongs to the uridine kinase family.

It localises to the cytoplasm. The enzyme catalyses uridine + ATP = UMP + ADP + H(+). It carries out the reaction cytidine + ATP = CMP + ADP + H(+). It functions in the pathway pyrimidine metabolism; CTP biosynthesis via salvage pathway; CTP from cytidine: step 1/3. Its pathway is pyrimidine metabolism; UMP biosynthesis via salvage pathway; UMP from uridine: step 1/1. This is Uridine kinase from Bacillus anthracis (strain A0248).